Here is a 193-residue protein sequence, read N- to C-terminus: Rho-related GTP-binding protein RhoA-D (193 aa).

Residues 12–19, 30–37, 59–63, 117–120, and 160–162 each bind GTP; these read GDGACGKT, FPEVYVPT, DTAGQ, NKKD, and SAK. (Microbial infection) O-linked (GlcNAc) tyrosine; by Yersinia Afp18 glycosylation is present at Tyr34. Cys190 is modified (cysteine methyl ester). The S-geranylgeranyl cysteine moiety is linked to residue Cys190. The propeptide at 191–193 is removed in mature form; it reads LLL.

This sequence belongs to the small GTPase superfamily. Rho family. In terms of processing, (Microbial infection) Glycosylated at Tyr-34 by Yersinia ruckeri toxin Afp18. Mono-O-GlcNAcylation by Afp18 inhibits RhoA activation by guanine nucleotide exchange factors and blocks RhoA signaling.

It localises to the cell membrane. Its function is as follows. Regulates a signal transduction pathway linking plasma membrane receptors to the assembly of focal adhesions and actin stress fibers. The sequence is that of Rho-related GTP-binding protein RhoA-D from Danio rerio (Zebrafish).